The chain runs to 451 residues: UPF0210 protein NMA1908 (451 aa).

This sequence belongs to the UPF0210 family. In terms of assembly, homodimer.

The polypeptide is UPF0210 protein NMA1908 (Neisseria meningitidis serogroup A / serotype 4A (strain DSM 15465 / Z2491)).